Consider the following 279-residue polypeptide: Large ribosomal subunit protein uL2 (279 aa).

2 disordered regions span residues 1–28 (MPAR…TKEK) and 221–279 (RGTV…GRRR). A compositionally biased stretch (polar residues) spans 12-22 (GRRNSSVLTRD).

It belongs to the universal ribosomal protein uL2 family. As to quaternary structure, part of the 50S ribosomal subunit. Forms a bridge to the 30S subunit in the 70S ribosome.

In terms of biological role, one of the primary rRNA binding proteins. Required for association of the 30S and 50S subunits to form the 70S ribosome, for tRNA binding and peptide bond formation. It has been suggested to have peptidyltransferase activity; this is somewhat controversial. Makes several contacts with the 16S rRNA in the 70S ribosome. The protein is Large ribosomal subunit protein uL2 of Rubrobacter xylanophilus (strain DSM 9941 / JCM 11954 / NBRC 16129 / PRD-1).